Here is a 497-residue protein sequence, read N- to C-terminus: Uridine 5'-monophosphate synthase (497 aa).

The OPRTase stretch occupies residues 8–226 (TRNGALKRNL…KLEINSELEN (219 aa)). The segment at 227–232 (LSSLPY) is domain linker. The OMPdecase stretch occupies residues 233 to 496 (VENVRTPLAE…WDALTRSDDS (264 aa)). UMP contacts are provided by residues Asp-271 and 293 to 295 (KLH). Lys-293 contributes to the orotidine 5'-phosphate binding site. Active-site for OMPdecase activity residues include Asp-324, Lys-326, and Asp-329. Orotidine 5'-phosphate-binding positions include Lys-326, Asp-329, Thr-333, Ser-387, 446–448 (QQW), and 466–467 (GR). Residues Asp-329, Thr-333, Ser-387, 446-448 (QQW), and 466-467 (GR) contribute to the UMP site.

This sequence in the N-terminal section; belongs to the purine/pyrimidine phosphoribosyltransferase family. The protein in the C-terminal section; belongs to the OMP decarboxylase family. In terms of tissue distribution, expressed in intestine and in neurons near the nerve ring and rectum.

It localises to the cytoplasm. The catalysed reaction is orotidine 5'-phosphate + diphosphate = orotate + 5-phospho-alpha-D-ribose 1-diphosphate. The enzyme catalyses orotidine 5'-phosphate + H(+) = UMP + CO2. It functions in the pathway pyrimidine metabolism; UMP biosynthesis via de novo pathway; UMP from orotate: step 1/2. Its pathway is pyrimidine metabolism; UMP biosynthesis via de novo pathway; UMP from orotate: step 2/2. Its function is as follows. Bifunctional enzyme which catalyzes the formation of UMP from orotate in the de novo pathway of pyrimidine biosynthesis. May also form UMP from uracil. Regulates the size of gut granules during embryonic development. Involved in resistance to DNA damaging agents including UV-C and X-ray radiation. This is Uridine 5'-monophosphate synthase from Caenorhabditis elegans.